Here is a 122-residue protein sequence, read N- to C-terminus: Ribonuclease P protein component (122 aa).

Belongs to the RnpA family. Consists of a catalytic RNA component (M1 or rnpB) and a protein subunit.

It carries out the reaction Endonucleolytic cleavage of RNA, removing 5'-extranucleotides from tRNA precursor.. RNaseP catalyzes the removal of the 5'-leader sequence from pre-tRNA to produce the mature 5'-terminus. It can also cleave other RNA substrates such as 4.5S RNA. The protein component plays an auxiliary but essential role in vivo by binding to the 5'-leader sequence and broadening the substrate specificity of the ribozyme. This Halorhodospira halophila (strain DSM 244 / SL1) (Ectothiorhodospira halophila (strain DSM 244 / SL1)) protein is Ribonuclease P protein component.